A 197-amino-acid chain; its full sequence is Glycerol-3-phosphate acyltransferase (197 aa).

A run of 5 helical transmembrane segments spans residues isoleucine 5–leucine 25, glycine 54–alanine 74, alanine 80–leucine 100, isoleucine 112–alanine 132, and isoleucine 153–leucine 173.

It belongs to the PlsY family. As to quaternary structure, probably interacts with PlsX.

Its subcellular location is the cell inner membrane. The enzyme catalyses an acyl phosphate + sn-glycerol 3-phosphate = a 1-acyl-sn-glycero-3-phosphate + phosphate. It functions in the pathway lipid metabolism; phospholipid metabolism. In terms of biological role, catalyzes the transfer of an acyl group from acyl-phosphate (acyl-PO(4)) to glycerol-3-phosphate (G3P) to form lysophosphatidic acid (LPA). This enzyme utilizes acyl-phosphate as fatty acyl donor, but not acyl-CoA or acyl-ACP. The sequence is that of Glycerol-3-phosphate acyltransferase from Rhodopseudomonas palustris (strain HaA2).